A 294-amino-acid chain; its full sequence is Factor associated with metabolism and energy (294 aa).

Positions 1–12 (MGLGHSKAHPRV) are enriched in basic residues. Disordered stretches follow at residues 1–28 (MGLGHSKAHPRVIKVTPLQSQETETPST) and 255–279 (FWDSSSSDSDELEKDERRPQALVRT). Residue G2 is the site of N-myristoyl glycine attachment. Residues 17–28 (PLQSQETETPST) are compositionally biased toward polar residues. Over residues 268-279 (KDERRPQALVRT) the composition is skewed to basic and acidic residues.

In terms of tissue distribution, expressed in proximal tubules of the kidney.

It is found in the cell membrane. Its subcellular location is the cytoplasmic vesicle. Functionally, may be involved in tuning the metabolism, energy expenditure, and excretion processes. The sequence is that of Factor associated with metabolism and energy from Mus musculus (Mouse).